Reading from the N-terminus, the 340-residue chain is DNA repair protein RAD51 homolog A (340 aa).

Positions 1-14 (MSSAAQQQQKAAAA) are enriched in low complexity. The tract at residues 1 to 21 (MSSAAQQQQKAAAAEQEEVEH) is disordered. One can recognise a HhH domain in the interval 49–78 (TVEAVAYTPRKDLLQIKGISEAKADKIIEA). 128–135 (GEFRSGKT) provides a ligand contact to ATP.

Belongs to the RecA family. RAD51 subfamily. Self-associates and may interact with XRCC3 homolog. In terms of tissue distribution, highly expressed in mitotic and meiotic tissues, but low levels in differentiated tissues.

The protein localises to the nucleus. In terms of biological role, binds to single and double-stranded DNA and exhibits DNA-dependent ATPase activity. Unwinds duplex DNA. Component of the meiotic recombination pathway. Seems to play a role in mediating chromosome homology search, chromosome pairing and synapsis at early stages and probably chromosome crossing-over at later stages in meiosis. Probably is involved in the repair of meiotic double strand breaks (DBSs) and in homologous recombination. This is DNA repair protein RAD51 homolog A (RAD51A) from Zea mays (Maize).